Here is a 212-residue protein sequence, read N- to C-terminus: Adenylate kinase (212 aa).

10–15 (GSGKGT) provides a ligand contact to ATP. The segment at 30–59 (STGDLMRKEINDETPLGIECARYMNEGRLV) is NMP. Residues threonine 31, arginine 36, 57–59 (RLV), and glutamine 90 contribute to the AMP site. The interval 124 to 161 (GRLICPKCKVSYHIISRKPKLEGICDNDGTELVRRPDD) is LID. Arginine 125 lines the ATP pocket. Cysteine 128 and cysteine 131 together coordinate Zn(2+). 134–135 (SY) is a binding site for ATP. Zn(2+) contacts are provided by cysteine 148 and aspartate 151. Arginine 158 and arginine 169 together coordinate AMP. Asparagine 198 contacts ATP.

This sequence belongs to the adenylate kinase family. In terms of assembly, monomer.

The protein localises to the cytoplasm. The enzyme catalyses AMP + ATP = 2 ADP. It participates in purine metabolism; AMP biosynthesis via salvage pathway; AMP from ADP: step 1/1. Catalyzes the reversible transfer of the terminal phosphate group between ATP and AMP. Plays an important role in cellular energy homeostasis and in adenine nucleotide metabolism. In Mesoplasma florum (strain ATCC 33453 / NBRC 100688 / NCTC 11704 / L1) (Acholeplasma florum), this protein is Adenylate kinase.